Here is a 232-residue protein sequence, read N- to C-terminus: MKIAIIGAMEEEVTILRDKIEEREETVIANCEFSTGRLNGADVILLKSGIGKVNAAMSTAILLERFRPDYVINTGSAGGFLSTLNVGDVVISNEVVHHDVDVTAFGYEYGQVPGMPARYKADETLVKIAEQNAKQIKDIQVVTGLIATGDSFMNDPARVEFVRSKFPELCAAEMEAAAIAQVCTQFAVPFVIIRALSDIAGKESNVSFEQFLDTAAKHSADLVLSIVSSLQK.

Residue glutamate 12 is the Proton acceptor of the active site. Substrate contacts are provided by residues glycine 78, methionine 153, and 174-175 (ME). Aspartate 198 functions as the Proton donor in the catalytic mechanism.

This sequence belongs to the PNP/UDP phosphorylase family. MtnN subfamily.

It catalyses the reaction S-adenosyl-L-homocysteine + H2O = S-(5-deoxy-D-ribos-5-yl)-L-homocysteine + adenine. The catalysed reaction is S-methyl-5'-thioadenosine + H2O = 5-(methylsulfanyl)-D-ribose + adenine. The enzyme catalyses 5'-deoxyadenosine + H2O = 5-deoxy-D-ribose + adenine. It functions in the pathway amino-acid biosynthesis; L-methionine biosynthesis via salvage pathway; S-methyl-5-thio-alpha-D-ribose 1-phosphate from S-methyl-5'-thioadenosine (hydrolase route): step 1/2. In terms of biological role, catalyzes the irreversible cleavage of the glycosidic bond in both 5'-methylthioadenosine (MTA) and S-adenosylhomocysteine (SAH/AdoHcy) to adenine and the corresponding thioribose, 5'-methylthioribose and S-ribosylhomocysteine, respectively. Also cleaves 5'-deoxyadenosine, a toxic by-product of radical S-adenosylmethionine (SAM) enzymes, into 5-deoxyribose and adenine. The protein is 5'-methylthioadenosine/S-adenosylhomocysteine nucleosidase of Geobacillus sp. (strain WCH70).